Consider the following 356-residue polypeptide: Ribosomal RNA large subunit methyltransferase M (356 aa).

S-adenosyl-L-methionine-binding positions include Ser-187, 220-223 (CPGG), Asp-239, Asp-259, and Asp-276. Residue Lys-305 is the Proton acceptor of the active site.

The protein belongs to the class I-like SAM-binding methyltransferase superfamily. RNA methyltransferase RlmE family. RlmM subfamily. As to quaternary structure, monomer.

The protein resides in the cytoplasm. The catalysed reaction is cytidine(2498) in 23S rRNA + S-adenosyl-L-methionine = 2'-O-methylcytidine(2498) in 23S rRNA + S-adenosyl-L-homocysteine + H(+). Catalyzes the 2'-O-methylation at nucleotide C2498 in 23S rRNA. The polypeptide is Ribosomal RNA large subunit methyltransferase M (Pseudoalteromonas atlantica (strain T6c / ATCC BAA-1087)).